Reading from the N-terminus, the 2646-residue chain is Probable helicase senataxin (2646 aa).

Ser102 carries the post-translational modification Phosphoserine. A Glycyl lysine isopeptide (Lys-Gly) (interchain with G-Cter in SUMO1) cross-link involves residue Lys339. Residue Ser640 is modified to Phosphoserine. Disordered stretches follow at residues 705-734 (KISAEKSGKESSSYAPSNSTSRNGPEWGCD) and 825-876 (GGAL…DDED). Over residues 714 to 727 (ESSSYAPSNSTSRN) the composition is skewed to polar residues. Residues 867–876 (LDNSSSDDED) show a composition bias toward acidic residues. Phosphoserine is present on residues Ser870, Ser871, Ser872, Ser938, Ser1002, and Ser1004. The interval 1001 to 1023 (ISDSDEEEDEDEDERSSSEENIK) is disordered. A compositionally biased stretch (acidic residues) spans 1003-1014 (DSDEEEDEDEDE). Lys1051 participates in a covalent cross-link: Glycyl lysine isopeptide (Lys-Gly) (interchain with G-Cter in SUMO2). Residues 1122–1133 (RNKAEGVKEHAG) are compositionally biased toward basic and acidic residues. The tract at residues 1122–1245 (RNKAEGVKEH…DTRRGQSKSS (124 aa)) is disordered. The segment covering 1147 to 1156 (GVKKPKRKRY) has biased composition (basic residues). Residues 1176–1189 (LPDRRDLTESDLKS) show a composition bias toward basic and acidic residues. Residues 1196 to 1211 (TPSSSVERDSTILQKS) are compositionally biased toward polar residues. Residues 1212–1222 (TKSRTHSKPVR) are compositionally biased toward basic residues. Ser1318 is modified (phosphoserine). Residues Lys1328, Lys1329, and Lys1398 each participate in a glycyl lysine isopeptide (Lys-Gly) (interchain with G-Cter in SUMO2) cross-link. Ser1472 carries the post-translational modification Phosphoserine. Residue Thr1474 is modified to Phosphothreonine. Positions 1591-1627 (LSKSLESTTLQQSALKNKSSGAQPNLKVTPPSSMGSQ) are disordered. The segment covering 1595 to 1613 (LESTTLQQSALKNKSSGAQ) has biased composition (polar residues). 1939 to 1946 (GPPGTGKS) contributes to the ATP binding site. A Bipartite nuclear localization signal motif is present at residues 2046 to 2063 (KKDLPSHIQEMLRRKEIL). Thr2450 carries the post-translational modification Phosphothreonine. 3 disordered regions span residues 2450 to 2472 (THPPATAPEAPRPQGGLPSNRLD), 2486 to 2506 (HTPSDTVTSKGPERPLLQDRL), and 2569 to 2624 (SHRS…THHV). 2 stretches are compositionally biased toward basic and acidic residues: residues 2496 to 2506 (GPERPLLQDRL) and 2593 to 2608 (KYSDPDAGLSHKREPR). Residues 2632–2646 (RRRLDDSSAKRRQFL) form a necessary for nuclear localization region.

Belongs to the DNA2/NAM7 helicase family. As to quaternary structure, homodimer. Interacts with PER2; the interaction inhibits termination of circadian target genes. Interacts with CHD4, POLR2A, PRKDC and TRIM28. Interacts with UBE2I. Interacts (via N-terminus domain) with EXOSC9 (via C-terminus region); the interaction enhances SETX sumoylation. Interacts with NCL (via N-terminus domain). Interacts with PABPN1, PABPC1 and SF3B1. Interacts with SMN1/SMN2 and POLR2A; SMN1/SMN2 recruits SETX to POLR2A. In terms of processing, ubiquitinated. Sumoylated preferentially with SUMO2 or SUMO3. As to expression, expressed in cerebellum, hippocampus, olfactory bulb, Bergmann glial fibers, stellate cells and Purkinje cells. Expressed in the epithelial cells of the lens but not in mature lens fiber cells. Expressed in the retina (highly expressed in inner and outer segments of photoreceptors and outer plexiform layer cells but weakly expressed in the inner plexiform and ganglion cell layers). Expressed in the kidney.

Its subcellular location is the nucleus. It localises to the nucleoplasm. The protein resides in the nucleolus. The protein localises to the cytoplasm. It is found in the chromosome. Its subcellular location is the telomere. It localises to the cell projection. The protein resides in the axon. The protein localises to the growth cone. Functionally, probable RNA/DNA helicase involved in diverse aspects of RNA metabolism and genomic integrity. Plays a role in transcription regulation by its ability to modulate RNA Polymerase II (Pol II) binding to chromatin and through its interaction with proteins involved in transcription. Contributes to the mRNA splicing efficiency and splice site selection. Required for the resolution of R-loop RNA-DNA hybrid formation at G-rich pause sites located downstream of the poly(A) site, allowing XRN2 recruitment and XRN2-mediated degradation of the downstream cleaved RNA and hence efficient RNA polymerase II (RNAp II) transcription termination. Required for the 3' transcriptional termination of PER1 and CRY2, thus playing an important role in the circadian rhythm regulation. Involved in DNA double-strand breaks damage response generated by oxidative stress. In association with RRP45, targets the RNA exosome complex to sites of transcription-induced DNA damage. Plays a role in the development and maturation of germ cells: essential for male meiosis, acting at the interface of transcription and meiotic recombination, and in the process of gene silencing during meiotic sex chromosome inactivation (MSCI). Plays a role in neurite outgrowth in hippocampal cells through FGF8-activated signaling pathways. Inhibits retinoic acid-induced apoptosis. May be involved in telomeric stability through the regulation of telomere repeat-containing RNA (TERRA) transcription. The chain is Probable helicase senataxin from Mus musculus (Mouse).